The primary structure comprises 470 residues: MDYLPMFAKLDGRPVLLVGGGEVALRKARLLLAAGARLTLVSPELEPDFHQFADRFTHLAERFTPAHLTGQILVVAATDDLEVNALVYQSANQLGLFVNVVDDPKRSSFIFPSIIDRSPIMVAVSSGGKAPVLVRLLRERLESLLPRHLGALAELSGRVRDQAKRVLSSISDRRRFWERAFASNTLAGLIEKEDWQGAEQWLNDGLDQAKNEVGEVVLVGAGPGDPGLLTLKALQQIQQAEVVLYDQLVSPEILDLVRRDATLVSVGKKAGAHSVPQEETNRLLVEYAKAGNRVVRLKGGDPFMFGRGGEELEVLAEEGIPFSVVPGITAAAGATAYAGIPLTHRDHAQSAVFITGHCQIDGKEPDWQQLAATSQTLVIYMGLMRSEHIQQQLVSHGRSSATPIAIIERGTTARQRVLTGTLADLAELAAQAVSPSLIVIGEVVALRERLAWFGEGQQQGTCDLKLVSLA.

Residues 1-202 are precorrin-2 dehydrogenase /sirohydrochlorin ferrochelatase; sequence MDYLPMFAKL…EDWQGAEQWL (202 aa). NAD(+) is bound by residues 22–23 and 43–44; these read EV and PE. A Phosphoserine modification is found at Ser126. A uroporphyrinogen-III C-methyltransferase region spans residues 214–470; it reads GEVVLVGAGP…TCDLKLVSLA (257 aa). Pro223 contributes to the S-adenosyl-L-methionine binding site. Asp246 acts as the Proton acceptor in catalysis. Lys268 functions as the Proton donor in the catalytic mechanism. S-adenosyl-L-methionine contacts are provided by residues 299-301, 329-330, Met381, and Gly410; these read GGD and TA.

The protein in the N-terminal section; belongs to the precorrin-2 dehydrogenase / sirohydrochlorin ferrochelatase family. This sequence in the C-terminal section; belongs to the precorrin methyltransferase family.

The catalysed reaction is uroporphyrinogen III + 2 S-adenosyl-L-methionine = precorrin-2 + 2 S-adenosyl-L-homocysteine + H(+). It catalyses the reaction precorrin-2 + NAD(+) = sirohydrochlorin + NADH + 2 H(+). It carries out the reaction siroheme + 2 H(+) = sirohydrochlorin + Fe(2+). It participates in cofactor biosynthesis; adenosylcobalamin biosynthesis; precorrin-2 from uroporphyrinogen III: step 1/1. It functions in the pathway cofactor biosynthesis; adenosylcobalamin biosynthesis; sirohydrochlorin from precorrin-2: step 1/1. Its pathway is porphyrin-containing compound metabolism; siroheme biosynthesis; precorrin-2 from uroporphyrinogen III: step 1/1. The protein operates within porphyrin-containing compound metabolism; siroheme biosynthesis; siroheme from sirohydrochlorin: step 1/1. It participates in porphyrin-containing compound metabolism; siroheme biosynthesis; sirohydrochlorin from precorrin-2: step 1/1. Functionally, multifunctional enzyme that catalyzes the SAM-dependent methylations of uroporphyrinogen III at position C-2 and C-7 to form precorrin-2 via precorrin-1. Then it catalyzes the NAD-dependent ring dehydrogenation of precorrin-2 to yield sirohydrochlorin. Finally, it catalyzes the ferrochelation of sirohydrochlorin to yield siroheme. This Aeromonas hydrophila subsp. hydrophila (strain ATCC 7966 / DSM 30187 / BCRC 13018 / CCUG 14551 / JCM 1027 / KCTC 2358 / NCIMB 9240 / NCTC 8049) protein is Siroheme synthase 2.